A 241-amino-acid polypeptide reads, in one-letter code: Carboxy-S-adenosyl-L-methionine synthase (241 aa).

S-adenosyl-L-methionine-binding positions include Y38, 63-65, 88-89, 116-117, N131, and R198; these read GCS, DN, and DI.

It belongs to the class I-like SAM-binding methyltransferase superfamily. Cx-SAM synthase family. As to quaternary structure, homodimer.

It catalyses the reaction prephenate + S-adenosyl-L-methionine = carboxy-S-adenosyl-L-methionine + 3-phenylpyruvate + H2O. In terms of biological role, catalyzes the conversion of S-adenosyl-L-methionine (SAM) to carboxy-S-adenosyl-L-methionine (Cx-SAM). In Pasteurella multocida (strain Pm70), this protein is Carboxy-S-adenosyl-L-methionine synthase.